The following is a 511-amino-acid chain: 2-isopropylmalate synthase (511 aa).

The segment covering 1-16 has biased composition (basic and acidic residues); the sequence is MTRKIDIFDTTLRDGE. The tract at residues 1–23 is disordered; the sequence is MTRKIDIFDTTLRDGEQSPGASM. A Pyruvate carboxyltransferase domain is found at 5 to 268; the sequence is IDIFDTTLRD…HTDVVTQELT (264 aa). Mn(2+) is bound by residues Asp-14, His-203, His-205, and Asn-239. The tract at residues 392–511 is regulatory domain; the sequence is ALESVQVVCG…IQTTRSKQGK (120 aa).

The protein belongs to the alpha-IPM synthase/homocitrate synthase family. LeuA type 1 subfamily. As to quaternary structure, homodimer. The cofactor is Mn(2+).

The protein resides in the cytoplasm. It catalyses the reaction 3-methyl-2-oxobutanoate + acetyl-CoA + H2O = (2S)-2-isopropylmalate + CoA + H(+). It functions in the pathway amino-acid biosynthesis; L-leucine biosynthesis; L-leucine from 3-methyl-2-oxobutanoate: step 1/4. Its function is as follows. Catalyzes the condensation of the acetyl group of acetyl-CoA with 3-methyl-2-oxobutanoate (2-ketoisovalerate) to form 3-carboxy-3-hydroxy-4-methylpentanoate (2-isopropylmalate). This is 2-isopropylmalate synthase from Olsenella uli (strain ATCC 49627 / DSM 7084 / CCUG 31166 / CIP 109912 / JCM 12494 / LMG 11480 / NCIMB 702895 / VPI D76D-27C) (Lactobacillus uli).